Reading from the N-terminus, the 122-residue chain is Sperm-egg fusion protein LLCFC1 (122 aa).

An N-terminal signal peptide occupies residues 1–28 (MPPLAPQLCRAVFLVPILLLLQVKPLNG). Residues 27–51 (NGSPGPKDGSQTEKTPSADQNQEQF) form a disordered region. The span at 38–49 (TEKTPSADQNQE) shows a compositional bias: polar residues.

It is found in the secreted. Sperm protein required for fusion of sperm with the egg membrane during fertilization. The chain is Sperm-egg fusion protein LLCFC1 from Homo sapiens (Human).